The primary structure comprises 88 residues: HssA/B-like protein 64 (88 aa).

Low complexity predominate over residues 1 to 24; it reads MTLFSSISSMSSSMTSSKSSFASF. Disordered stretches follow at residues 1 to 25 and 45 to 88; these read MTLF…ASFG and GVSS…GNSC. The segment covering 56-66 has biased composition (gly residues); sequence AKSGGDCGGKG.

Belongs to the hssA/B family.

The chain is HssA/B-like protein 64 (hssl64) from Dictyostelium discoideum (Social amoeba).